A 124-amino-acid chain; its full sequence is uncharacterized protein (124 aa).

The disordered stretch occupies residues 44–92 (DRVENSGNGTGSISAPLTDLGPSIGDSHENKGADIPIHPPLDTQSHAKD). Positions 48-58 (NSGNGTGSISA) are enriched in polar residues.

This is an uncharacterized protein from Caenorhabditis elegans.